We begin with the raw amino-acid sequence, 412 residues long: Gamma-glutamyl phosphate reductase (412 aa).

It belongs to the gamma-glutamyl phosphate reductase family.

The protein localises to the cytoplasm. The enzyme catalyses L-glutamate 5-semialdehyde + phosphate + NADP(+) = L-glutamyl 5-phosphate + NADPH + H(+). It functions in the pathway amino-acid biosynthesis; L-proline biosynthesis; L-glutamate 5-semialdehyde from L-glutamate: step 2/2. Catalyzes the NADPH-dependent reduction of L-glutamate 5-phosphate into L-glutamate 5-semialdehyde and phosphate. The product spontaneously undergoes cyclization to form 1-pyrroline-5-carboxylate. In Bartonella henselae (strain ATCC 49882 / DSM 28221 / CCUG 30454 / Houston 1) (Rochalimaea henselae), this protein is Gamma-glutamyl phosphate reductase.